The sequence spans 285 residues: Probable endonuclease 4 (285 aa).

Zn(2+) is bound by residues His-69, His-109, Glu-145, Asp-179, His-182, His-216, Asp-229, His-231, and Glu-261.

Belongs to the AP endonuclease 2 family. It depends on Zn(2+) as a cofactor.

It carries out the reaction Endonucleolytic cleavage to 5'-phosphooligonucleotide end-products.. Functionally, endonuclease IV plays a role in DNA repair. It cleaves phosphodiester bonds at apurinic or apyrimidinic (AP) sites, generating a 3'-hydroxyl group and a 5'-terminal sugar phosphate. The protein is Probable endonuclease 4 of Escherichia fergusonii (strain ATCC 35469 / DSM 13698 / CCUG 18766 / IAM 14443 / JCM 21226 / LMG 7866 / NBRC 102419 / NCTC 12128 / CDC 0568-73).